Reading from the N-terminus, the 3828-residue chain is Histone-lysine N-methyltransferase trithorax (3828 aa).

Disordered stretches follow at residues glutamate 25–alanine 179, alanine 356–glutamine 390, and phenylalanine 512–arginine 589. A compositionally biased stretch (low complexity) spans alanine 29–alanine 57. Polar residues predominate over residues alanine 77 to alanine 89. The span at glycine 101–glycine 114 shows a compositional bias: low complexity. The segment covering aspartate 152–serine 165 has biased composition (acidic residues). The span at serine 359 to alanine 387 shows a compositional bias: low complexity. Over residues arginine 513 to glutamate 523 the composition is skewed to basic and acidic residues. The span at aspartate 524–alanine 553 shows a compositional bias: acidic residues. The span at alanine 554 to phenylalanine 581 shows a compositional bias: basic and acidic residues. Positions alanine 725 to isoleucine 839 form a DNA-binding region, nuclear receptor. Disordered regions lie at residues glutamate 933–proline 1036, glutamate 1075–proline 1094, and alanine 1131–asparagine 1170. Residues alanine 960 to lysine 974 are compositionally biased toward basic and acidic residues. Low complexity-rich tracts occupy residues alanine 998–serine 1022 and alanine 1078–proline 1094. The segment covering glutamate 1140–asparagine 1170 has biased composition (polar residues). 3 consecutive PHD-type zinc fingers follow at residues arginine 1251 to cysteine 1334, tyrosine 1335 to cysteine 1380, and glycine 1408 to arginine 1469. The 162-residue stretch at alanine 1483–glutamate 1644 folds into the Bromo domain. The C2HC pre-PHD-type zinc finger occupies threonine 1708–valine 1748. The PHD-type 4 zinc finger occupies isoleucine 1769–alanine 1816. Residues lysine 1856–glutamine 1913 form the FYR N-terminal domain. 8 disordered regions span residues cysteine 2252 to serine 2272, alanine 2464 to glutamine 2510, arginine 2826 to serine 2848, arginine 2897 to alanine 2973, alanine 2988 to methionine 3031, alanine 3117 to glycine 3178, asparagine 3314 to aspartate 3338, and lysine 3457 to aspartate 3487. Composition is skewed to low complexity over residues glutamate 2253–threonine 2268, glutamine 2483–glutamine 2510, and serine 2836–serine 2848. The span at arginine 2897–threonine 2917 shows a compositional bias: polar residues. Composition is skewed to low complexity over residues alanine 2956–alanine 2973, alanine 2988–glutamate 2997, leucine 3005–methionine 3031, and alanine 3117–serine 3132. A compositionally biased stretch (polar residues) spans glutamine 3148–serine 3164. Acidic residues predominate over residues aspartate 3328–aspartate 3338. The 85-residue stretch at glycine 3493–tyrosine 3577 folds into the FYR C-terminal domain. Residues aspartate 3690–lysine 3806 enclose the SET domain. Residues histidine 3700, arginine 3702, tyrosine 3744, and asparagine 3767–histidine 3768 contribute to the S-adenosyl-L-methionine site. Residues cysteine 3770, cysteine 3816, cysteine 3818, and cysteine 3823 each coordinate Zn(2+). Residues glutamate 3812–asparagine 3828 enclose the Post-SET domain.

This sequence belongs to the class V-like SAM-binding methyltransferase superfamily. Histone-lysine methyltransferase family. TRX/MLL subfamily. In terms of assembly, interacts with ash1 via its SET domain.

The protein resides in the nucleus. The catalysed reaction is L-lysyl(9)-[histone H3] + 3 S-adenosyl-L-methionine = N(6),N(6),N(6)-trimethyl-L-lysyl(9)-[histone H3] + 3 S-adenosyl-L-homocysteine + 3 H(+). In terms of biological role, histone methyltransferase that methylates 'Lys-4' of histone H3 (H3K4me). H3K4me represents a specific tag for epigenetic transcriptional activation. Functions in segment determination through interaction with genes of bithorax (BX-C) and antennapedia (ANT-C) complexes. Acts as an activator of BX-C. Involved in the very early regulation of homeotic genes expressed only in the posterior region of the embryo. The protein is Histone-lysine N-methyltransferase trithorax (trx) of Drosophila virilis (Fruit fly).